A 212-amino-acid chain; its full sequence is Pyridoxine/pyridoxamine 5'-phosphate oxidase (212 aa).

Substrate-binding positions include 8-11 (RREY) and Lys-66. FMN-binding positions include 61–66 (RIVLLK), 76–77 (FT), Arg-82, Lys-83, and Gln-105. Residues Tyr-123, Arg-127, and Ser-131 each coordinate substrate. FMN contacts are provided by residues 140–141 (QS) and Trp-185. Substrate is bound at residue 191-193 (RLH). Arg-195 lines the FMN pocket.

The protein belongs to the pyridoxamine 5'-phosphate oxidase family. In terms of assembly, homodimer. It depends on FMN as a cofactor.

The enzyme catalyses pyridoxamine 5'-phosphate + O2 + H2O = pyridoxal 5'-phosphate + H2O2 + NH4(+). The catalysed reaction is pyridoxine 5'-phosphate + O2 = pyridoxal 5'-phosphate + H2O2. It participates in cofactor metabolism; pyridoxal 5'-phosphate salvage; pyridoxal 5'-phosphate from pyridoxamine 5'-phosphate: step 1/1. The protein operates within cofactor metabolism; pyridoxal 5'-phosphate salvage; pyridoxal 5'-phosphate from pyridoxine 5'-phosphate: step 1/1. Functionally, catalyzes the oxidation of either pyridoxine 5'-phosphate (PNP) or pyridoxamine 5'-phosphate (PMP) into pyridoxal 5'-phosphate (PLP). The sequence is that of Pyridoxine/pyridoxamine 5'-phosphate oxidase from Shewanella oneidensis (strain ATCC 700550 / JCM 31522 / CIP 106686 / LMG 19005 / NCIMB 14063 / MR-1).